A 279-amino-acid chain; its full sequence is MNIHAATPEHSPLGKTVSYQDQYDPSLLFPIARQTKRDEIGVDEAALPFAGVDIWTGFELSWLNARGKPQIGIATFRIPAGSPRLIESKSFKLYLNSYNQTRMDGIDALAAQLARDLSAAAGAEVAVSIALPQAFAAERIAELAGECIDELDIAVDNYAPCPEILSADSTAIVSETLCSNLLKSNCLVTGQPDWGSVSIRYTGPKIDREALLRYLIGFRRHNEFHEQCVERIFVDVLRACAPTKLTVYARYTRRGGLDINPWRSNCDAAPTDNVRTARQ.

86-88 (IES) is a substrate binding site. 88–89 (SK) is a binding site for NADPH. C186 serves as the catalytic Thioimide intermediate. D193 acts as the Proton donor in catalysis. Residue 225–226 (HE) coordinates substrate. 254-255 (RG) contributes to the NADPH binding site.

This sequence belongs to the GTP cyclohydrolase I family. QueF type 2 subfamily. Homodimer.

The protein localises to the cytoplasm. The catalysed reaction is 7-aminomethyl-7-carbaguanine + 2 NADP(+) = 7-cyano-7-deazaguanine + 2 NADPH + 3 H(+). It functions in the pathway tRNA modification; tRNA-queuosine biosynthesis. Catalyzes the NADPH-dependent reduction of 7-cyano-7-deazaguanine (preQ0) to 7-aminomethyl-7-deazaguanine (preQ1). The protein is NADPH-dependent 7-cyano-7-deazaguanine reductase of Chromobacterium violaceum (strain ATCC 12472 / DSM 30191 / JCM 1249 / CCUG 213 / NBRC 12614 / NCIMB 9131 / NCTC 9757 / MK).